Reading from the N-terminus, the 593-residue chain is Zinc metalloproteinase-disintegrin-like kaouthiagin-like (593 aa).

A signal peptide spans 1–20; the sequence is MIQALLVIICLAVFPHQGSS. A propeptide spanning residues 21 to 196 is cleaved from the precursor; it reads IILESGNVND…KTSQFTNTPE (176 aa). In terms of domain architecture, Peptidase M12B spans 205–400; the sequence is KYIEFYVIVD…DRPQCILNKP (196 aa). 2 residues coordinate Ca(2+): Glu-208 and Asp-292. Cystine bridges form between Cys-316–Cys-395, Cys-356–Cys-379, and Cys-358–Cys-363. Asn-319 carries an N-linked (GlcNAc...) asparagine glycan. Positions 341, 345, and 351 each coordinate Zn(2+). Ca(2+) is bound by residues Cys-395, Asn-398, Ile-410, Asn-413, Phe-415, Glu-417, Glu-420, and Asp-423. The 70-residue stretch at 408-477 folds into the Disintegrin domain; the sequence is PPICGNYFVE…ECPTDSLQRN (70 aa). 12 cysteine pairs are disulfide-bonded: Cys-411/Cys-440, Cys-422/Cys-435, Cys-424/Cys-430, Cys-434/Cys-462, Cys-449/Cys-469, Cys-456/Cys-488, Cys-481/Cys-493, Cys-500/Cys-550, Cys-515/Cys-558, Cys-528/Cys-538, Cys-545/Cys-581, and Cys-575/Cys-586. A D/ECD-tripeptide motif is present at residues 455–457; sequence DCD. Ca(2+)-binding residues include Asp-457, Leu-458, Glu-460, Asp-472, and Ser-473. N-linked (GlcNAc...) asparagine glycosylation is present at Asn-490.

It belongs to the venom metalloproteinase (M12B) family. P-III subfamily. P-IIIa sub-subfamily. As to quaternary structure, monomer. Zn(2+) is required as a cofactor. In terms of tissue distribution, expressed by the venom gland.

The protein resides in the secreted. Its function is as follows. Snake venom zinc metalloproteinase that cleaves the membrane-bound precursor of TNF-alpha (TNF) into its mature soluble form showing the same digestion pattern than ADAM17. The protein is Zinc metalloproteinase-disintegrin-like kaouthiagin-like of Naja atra (Chinese cobra).